The sequence spans 1027 residues: C2 and GRAM domain-containing protein At5g50170 (1027 aa).

The C2 1 domain maps to 1 to 103 (MRLYVYILQA…ENQTLLPTWF (103 aa)). Positions 158–167 (SPKDLISSRD) are enriched in basic and acidic residues. Disordered regions lie at residues 158–177 (SPKD…HDGK) and 201–223 (LHDE…DQCS). Over residues 168-177 (GKRRKHHDGK) the composition is skewed to basic residues. The segment covering 206–223 (SVGQSVNSNYEDATDQCS) has biased composition (polar residues). Residues 253 to 426 (TGGVLVDQKY…LLAKTYKTLD (174 aa)) form the VASt 1 domain. A helical membrane pass occupies residues 452–472 (FLYFWSSSVICAVLLSVYVVV). Residues 516 to 639 (TVHFVQARLH…TADELADLSV (124 aa)) form the C2 2 domain. Positions 693-756 (AFQKLFGLPH…LWEDIDDIQV (64 aa)) constitute a GRAM domain. The region spanning 855 to 1018 (MMSKVYTCDL…VIFDLFQKES (164 aa)) is the VASt 2 domain.

Its subcellular location is the membrane. This chain is C2 and GRAM domain-containing protein At5g50170, found in Arabidopsis thaliana (Mouse-ear cress).